Here is a 1355-residue protein sequence, read N- to C-terminus: Ecdysone-induced protein 75B, isoform A (1355 aa).

Disordered regions lie at residues 60-91 (QHQP…QQHS), 126-228 (RLKN…DSSY), 248-268 (ELEQ…EAKP), and 308-344 (ATQQ…NSSA). Residues 66–76 (QLHHQHQHQHQ) are compositionally biased toward basic residues. 2 stretches are compositionally biased toward low complexity: residues 77-91 (HQQQ…QQHS) and 143-179 (TLVK…QHQQ). Acidic residues predominate over residues 200–213 (SGIDEDSPNSDEDC). Composition is skewed to polar residues over residues 218–228 (PAGTSLEDSSY) and 254–264 (TTGGSNAQQQV). Composition is skewed to low complexity over residues 308–321 (ATQQ…QHQH) and 330–344 (DSNC…NSSA). A DNA-binding region (nuclear receptor) is located at residues 384 to 474 (SQLNYLCQKF…VGMSRDAVRF (91 aa)). The NR C4-type; degenerate zinc finger occupies 387–421 (NYLCQKFDEKLDTALSNSSANTGRNTPAVTANEDA). The NR C4-type zinc-finger motif lies at 438 to 457 (CTKNQQCSILRINRNRCQYC). One can recognise an NR LBD domain in the interval 508-756 (DQPRLLAAVL…QQMWSMEDGN (249 aa)). Disordered stretches follow at residues 780 to 821 (KSPL…SALA), 927 to 964 (LDSP…SVDD), 987 to 1007 (VSVS…KRQI), 1051 to 1117 (AEAD…SSHS), 1147 to 1260 (ENST…SNSA), and 1312 to 1344 (TVTA…NPGL). 5 stretches are compositionally biased toward low complexity: residues 797–809 (GSPS…GVSL), 948–960 (SSGG…SPRS), 987–1001 (VSVS…STSS), 1053–1098 (ADAS…AQSQ), and 1106–1117 (SSPKASMASSHS). Polar residues-rich tracts occupy residues 1149-1162 (STAA…VGNR) and 1174-1196 (AVQN…QRQQ). Low complexity-rich tracts occupy residues 1197–1233 (SVSP…SASS), 1242–1260 (STSN…SNSA), and 1315–1343 (ASNG…PNPG).

Belongs to the nuclear hormone receptor family. NR1 subfamily.

The protein localises to the nucleus. Implicated in the regulation of ecdysone-triggered gene hierarchies. Probably plays a key role in mediating the regulation of the larval molt by 20-OH-ecdysone. This is Ecdysone-induced protein 75B, isoform A (Eip75B) from Drosophila melanogaster (Fruit fly).